The chain runs to 466 residues: Uronate isomerase (466 aa).

Belongs to the metallo-dependent hydrolases superfamily. Uronate isomerase family.

It catalyses the reaction D-glucuronate = D-fructuronate. The catalysed reaction is aldehydo-D-galacturonate = keto-D-tagaturonate. Its pathway is carbohydrate metabolism; pentose and glucuronate interconversion. In Streptococcus agalactiae serotype V (strain ATCC BAA-611 / 2603 V/R), this protein is Uronate isomerase.